Reading from the N-terminus, the 209-residue chain is MDLHNIREDYSKQELSQANCHADPIQQFEQWLEEAITAKANEPTAMNVATVLDGKPTSRIVLLKEVNPNGFVFFTNYQSRKGQAIEQNPYVALTFFWAELERSVRIEGRIEKISAEQSDNYFASRPYTSRVGAWASNQSQVLSSKSELVAKAALIAAKHPLHVPRPPHWGGYIVLPERIEFWQGRPSRLHDRICYRLVEGAWHKERLSP.

Substrate-binding positions include 7–10 and Lys-64; that span reads REDY. FMN-binding positions include 59 to 64, 74 to 75, Arg-80, and Lys-81; these read RIVLLK and FT. Residues Tyr-121, Arg-125, and Ser-129 each contribute to the substrate site. FMN contacts are provided by residues 138–139 and Trp-182; that span reads QS. 188–190 lines the substrate pocket; that stretch reads RLH. Arg-192 contributes to the FMN binding site.

This sequence belongs to the pyridoxamine 5'-phosphate oxidase family. As to quaternary structure, homodimer. Requires FMN as cofactor.

The catalysed reaction is pyridoxamine 5'-phosphate + O2 + H2O = pyridoxal 5'-phosphate + H2O2 + NH4(+). It catalyses the reaction pyridoxine 5'-phosphate + O2 = pyridoxal 5'-phosphate + H2O2. The protein operates within cofactor metabolism; pyridoxal 5'-phosphate salvage; pyridoxal 5'-phosphate from pyridoxamine 5'-phosphate: step 1/1. Its pathway is cofactor metabolism; pyridoxal 5'-phosphate salvage; pyridoxal 5'-phosphate from pyridoxine 5'-phosphate: step 1/1. Catalyzes the oxidation of either pyridoxine 5'-phosphate (PNP) or pyridoxamine 5'-phosphate (PMP) into pyridoxal 5'-phosphate (PLP). The protein is Pyridoxine/pyridoxamine 5'-phosphate oxidase of Actinobacillus pleuropneumoniae serotype 5b (strain L20).